The primary structure comprises 117 residues: Protein Rev (117 aa).

Phosphoserine; by host CK2 is present on residues Ser5 and Ser8. The interval 18–26 (LIKILYQSN) is homomultimerization. Residues 24 to 49 (QSNPPPNTEGTTRQARRNRRRRWRAR) are disordered. The short motif at 35 to 51 (TRQARRNRRRRWRARQR) is the Nuclear localization signal and RNA-binding (RRE) element. Basic residues predominate over residues 37-49 (QARRNRRRRWRAR). The short motif at 74-85 (LQLPPLERLTLN) is the Nuclear export signal and binding to XPO1 element. 2 positions are modified to phosphoserine; by host: Ser93 and Ser100. The segment covering 93–105 (SGTQGVGSPQISV) has biased composition (polar residues). Positions 93 to 117 (SGTQGVGSPQISVESPAILGSGTEE) are disordered.

Belongs to the HIV-1 REV protein family. As to quaternary structure, homomultimer; when bound to the RRE. Multimeric assembly is essential for activity and may involve XPO1. Binds to human KPNB1, XPO1, TNPO1, RANBP5 and IPO7. Interacts with the viral Integrase. Interacts with human KHDRBS1. Interacts with human NAP1; this interaction decreases Rev multimerization and stimulates its activity. Interacts with human DEAD-box helicases DDX3 and DDX24; these interactions may serve for viral RNA export to the cytoplasm and packaging, respectively. Interacts with human PSIP1; this interaction may inhibit HIV-1 DNA integration by promoting dissociation of the Integrase-LEDGF/p75 complex. Post-translationally, asymmetrically arginine dimethylated at one site by host PRMT6. Methylation impairs the RNA-binding activity and export of viral RNA from the nucleus to the cytoplasm. In terms of processing, phosphorylated by protein kinase CK2. Presence of, and maybe binding to the N-terminus of the regulatory beta subunit of CK2 is necessary for CK2-mediated Rev's phosphorylation.

Its subcellular location is the host nucleus. The protein localises to the host nucleolus. The protein resides in the host cytoplasm. Its function is as follows. Escorts unspliced or incompletely spliced viral pre-mRNAs (late transcripts) out of the nucleus of infected cells. These pre-mRNAs carry a recognition sequence called Rev responsive element (RRE) located in the env gene, that is not present in fully spliced viral mRNAs (early transcripts). This function is essential since most viral proteins are translated from unspliced or partially spliced pre-mRNAs which cannot exit the nucleus by the pathway used by fully processed cellular mRNAs. Rev itself is translated from a fully spliced mRNA that readily exits the nucleus. Rev's nuclear localization signal (NLS) binds directly to KPNB1/Importin beta-1 without previous binding to KPNA1/Importin alpha-1. KPNB1 binds to the GDP bound form of RAN (Ran-GDP) and targets Rev to the nucleus. In the nucleus, the conversion from Ran-GDP to Ran-GTP dissociates Rev from KPNB1 and allows Rev's binding to the RRE in viral pre-mRNAs. Rev multimerization on the RRE via cooperative assembly exposes its nuclear export signal (NES) to the surface. Rev can then form a complex with XPO1/CRM1 and Ran-GTP, leading to nuclear export of the complex. Conversion from Ran-GTP to Ran-GDP mediates dissociation of the Rev/RRE/XPO1/RAN complex, so that Rev can return to the nucleus for a subsequent round of export. Beside KPNB1, also seems to interact with TNPO1/Transportin-1, RANBP5/IPO5 and IPO7/RANBP7 for nuclear import. The nucleoporin-like HRB/RIP is an essential cofactor that probably indirectly interacts with Rev to release HIV RNAs from the perinuclear region to the cytoplasm. This is Protein Rev from Human immunodeficiency virus type 1 group M subtype A (isolate MAL) (HIV-1).